The sequence spans 357 residues: MRKIIHVDMDCYFAAVEMRDFPEYRGKPLAVGGSRERRGVISTCNYEARRFGVRSAMATAYAQKLCPDLILVPGRMQVYKDVSSQIRAIFSRYTELIEPLSLDEAYLDVSDCKLHKGSATLIAEAIRRDILAETGLTASAGVAPVKFLAKVASDLNKPNGQYVIPPDKVPEFIRTLSLRQIPGVGKVTAEKLSSLGLNTCGDVQTYPKQELITRFGKFGAVLIERAQGIDDRGLSVSRERKSVGVETTLAQDIYTLEQCQQVMPGLIQELSTRLSRSAKDRQIHKQVVKLKFSDFKQTTIEHRSNDVSVMMFYELLAQAIARQDGRGIRLLGVAVGLSDKSLISEVDPLQTQLVLSI.

One can recognise a UmuC domain in the interval 4–185; sequence IIHVDMDCYF…LSLRQIPGVG (182 aa). Positions 8 and 103 each coordinate Mg(2+). Glutamate 104 is an active-site residue.

This sequence belongs to the DNA polymerase type-Y family. Monomer. The cofactor is Mg(2+).

Its subcellular location is the cytoplasm. The enzyme catalyses DNA(n) + a 2'-deoxyribonucleoside 5'-triphosphate = DNA(n+1) + diphosphate. Poorly processive, error-prone DNA polymerase involved in untargeted mutagenesis. Copies undamaged DNA at stalled replication forks, which arise in vivo from mismatched or misaligned primer ends. These misaligned primers can be extended by PolIV. Exhibits no 3'-5' exonuclease (proofreading) activity. May be involved in translesional synthesis, in conjunction with the beta clamp from PolIII. This Shewanella oneidensis (strain ATCC 700550 / JCM 31522 / CIP 106686 / LMG 19005 / NCIMB 14063 / MR-1) protein is DNA polymerase IV.